A 315-amino-acid polypeptide reads, in one-letter code: DNA-directed RNA polymerase subunit alpha (315 aa).

The segment at 1-228 (MIGMEKPKIE…EHLELFISLT (228 aa)) is alpha N-terminal domain (alpha-NTD). The alpha C-terminal domain (alpha-CTD) stretch occupies residues 245–315 (RNKLMEMTIE…FGLSLRQPDD (71 aa)).

It belongs to the RNA polymerase alpha chain family. As to quaternary structure, homodimer. The RNAP catalytic core consists of 2 alpha, 1 beta, 1 beta' and 1 omega subunit. When a sigma factor is associated with the core the holoenzyme is formed, which can initiate transcription.

The catalysed reaction is RNA(n) + a ribonucleoside 5'-triphosphate = RNA(n+1) + diphosphate. Its function is as follows. DNA-dependent RNA polymerase catalyzes the transcription of DNA into RNA using the four ribonucleoside triphosphates as substrates. The protein is DNA-directed RNA polymerase subunit alpha of Symbiobacterium thermophilum (strain DSM 24528 / JCM 14929 / IAM 14863 / T).